A 235-amino-acid polypeptide reads, in one-letter code: Deoxyribose-phosphate aldolase (235 aa).

The Proton donor/acceptor role is filled by Asp107. Lys167 serves as the catalytic Schiff-base intermediate with acetaldehyde. Residue Lys197 is the Proton donor/acceptor of the active site.

Belongs to the DeoC/FbaB aldolase family. DeoC type 1 subfamily. Homotetramer.

Its subcellular location is the cytoplasm. The enzyme catalyses 2-deoxy-D-ribose 5-phosphate = D-glyceraldehyde 3-phosphate + acetaldehyde. The protein operates within carbohydrate degradation; 2-deoxy-D-ribose 1-phosphate degradation; D-glyceraldehyde 3-phosphate and acetaldehyde from 2-deoxy-alpha-D-ribose 1-phosphate: step 2/2. Its function is as follows. Catalyzes a reversible aldol reaction between acetaldehyde and D-glyceraldehyde 3-phosphate to generate 2-deoxy-D-ribose 5-phosphate. The protein is Deoxyribose-phosphate aldolase of Aeropyrum pernix (strain ATCC 700893 / DSM 11879 / JCM 9820 / NBRC 100138 / K1).